Consider the following 493-residue polypeptide: Maintenance of mitochondrial morphology protein 1 (493 aa).

Residues 1-23 (MSQHSQYGVPGVPAQSSLSFTQG) lie on the Lumenal side of the membrane. Residues 24–44 (FLLGQLSVVLLIGAFIKFFIF) form a helical membrane-spanning segment. Topologically, residues 45-493 (GEAPAPPSRG…GSMPRVVRTP (449 aa)) are cytoplasmic. Positions 52–104 (SRGLASRTASHHRSYSINQGDNNANNNTNNGSSPRTLREKPSTSNVLRPVPSS) are disordered. The segment covering 69–81 (NQGDNNANNNTNN) has biased composition (low complexity). Positions 93 to 104 (STSNVLRPVPSS) are enriched in polar residues. The SMP-LTD domain maps to 140–391 (QPESLDWFNV…EPRVQVVGLP (252 aa)). The tract at residues 420 to 493 (SSRSGGGPVE…GSMPRVVRTP (74 aa)) is disordered.

This sequence belongs to the MMM1 family. Homodimer. Component of the ER-mitochondria encounter structure (ERMES) or MDM complex, composed of mmm1, mdm10, mdm12 and mdm34. A mmm1 homodimer associates with one molecule of mdm12 on each side in a pairwise head-to-tail manner, and the SMP-LTD domains of mmm1 and mdm12 generate a continuous hydrophobic tunnel for phospholipid trafficking.

The protein localises to the endoplasmic reticulum membrane. Functionally, component of the ERMES/MDM complex, which serves as a molecular tether to connect the endoplasmic reticulum (ER) and mitochondria. Components of this complex are involved in the control of mitochondrial shape and protein biogenesis, and function in nonvesicular lipid trafficking between the ER and mitochondria. The mdm12-mmm1 subcomplex functions in the major beta-barrel assembly pathway that is responsible for biogenesis of all outer membrane beta-barrel proteins, and acts in a late step after the SAM complex. The mdm10-mdm12-mmm1 subcomplex further acts in the TOM40-specific pathway after the action of the mdm12-mmm1 complex. Essential for establishing and maintaining the structure of mitochondria and maintenance of mtDNA nucleoids. This chain is Maintenance of mitochondrial morphology protein 1, found in Talaromyces stipitatus (strain ATCC 10500 / CBS 375.48 / QM 6759 / NRRL 1006) (Penicillium stipitatum).